The chain runs to 261 residues: [LysW]-aminoadipate/[LysW]-glutamate kinase (261 aa).

Substrate contacts are provided by residues 35–36 (GG), Arg-62, and Asn-166.

The protein belongs to the acetylglutamate kinase family. LysZ subfamily.

It localises to the cytoplasm. It catalyses the reaction [amino-group carrier protein]-C-terminal-N-(1,4-dicarboxybutan-1-yl)-L-glutamine + ATP = [amino-group carrier protein]-C-terminal-N-(1-carboxy-5-phosphooxy-5-oxopentan-1-yl)-L-glutamine + ADP. The enzyme catalyses [amino-group carrier protein]-C-terminal-gamma-(L-glutamyl)-L-glutamate + ATP = [amino-group carrier protein]-C-terminal-gamma-(5-phospho-L-glutamyl)-L-glutamate + ADP. It functions in the pathway amino-acid biosynthesis; L-lysine biosynthesis via AAA pathway; L-lysine from L-alpha-aminoadipate (Thermus route): step 2/5. It participates in amino-acid biosynthesis; L-arginine biosynthesis. Involved in both the arginine and lysine biosynthetic pathways. Phosphorylates the LysW-bound precursors glutamate (for arginine biosynthesis), respectively alpha-aminoadipate (for lysine biosynthesis). The chain is [LysW]-aminoadipate/[LysW]-glutamate kinase from Sulfolobus acidocaldarius (strain ATCC 33909 / DSM 639 / JCM 8929 / NBRC 15157 / NCIMB 11770).